The primary structure comprises 202 residues: Nitrophorin-3 (202 aa).

The first 23 residues, 1-23, serve as a signal peptide directing secretion; that stretch reads MEPYSALLAVTILCLTSTMGVSG. 2 cysteine pairs are disulfide-bonded: C25-C144 and C62-C193. H80 contacts heme.

This sequence belongs to the calycin superfamily. Nitrophorin family. In terms of assembly, interacts weakly with host coagulation factor IX (F9) (inactive and activated) in the presence of Ca(2+). In terms of tissue distribution, salivary gland (at protein level).

The protein resides in the secreted. In terms of biological role, heme-based protein that deliver nitric oxide gas (NO) to the victim while feeding, resulting in vasodilation and inhibition of platelet aggregation. Reversibly binds nitric oxide (NO). Also binds tightly to histamine, which is released by the host to induce wound healing. Exhibits weak anticoagulant activity. In Rhodnius prolixus (Triatomid bug), this protein is Nitrophorin-3.